The chain runs to 170 residues: MAQMVAGDQDAGTLWVPSQSESQTESDISTQSLRKPTMSYVILKTLADKRVHNCVSLATLKKAVSITGYNMTHNTWRFKRVLQNLLDKGMIMHVTCCKGASGSLCLCKERALKSNHRAKRCQDRQKSQKPQKPGQRESEPCQLLLSSKKKNDQLFKGVRRVAKGNRHCHY.

The 75-residue stretch at 34–108 folds into the H15 domain; it reads RKPTMSYVIL…GASGSLCLCK (75 aa). Residue serine 56 is modified to Phosphoserine. Positions 118–140 are disordered; the sequence is AKRCQDRQKSQKPQKPGQRESEP.

The protein belongs to the histone H1/H5 family. In terms of tissue distribution, expressed exclusively in the testis by haploid germ cells (at protein level).

It is found in the nucleus. The protein resides in the chromosome. DNA-binding protein that may be implicated in chromatin remodeling and/or transcriptional regulation during spermiogenesis, the process of spermatid maturation into spermatozoa. The sequence is that of Histone H1.9 from Mus musculus (Mouse).